Reading from the N-terminus, the 292-residue chain is MDKVKIALQYMLPKHLLSRLVGKLAAAEAGALTTAAIKWFIKQYKIDMSEAAQSEPEAYKSFNAFFTRALKPGIRPLDMDADIMVHPVDGAVSQLGPIKNGRIFQAKGHHYSSLTLLGDQAEDAKRFEGGDFATIYLAPKDYHRIHMPIKGTLSKMTYVPGELFSVNPLTARNVPGLFARNERVVAIFETELGPLAMVLVGATIVASIETVWAGTVTPPTGKQVFTWEYPTQGPDAITLDKGEEMGRFKLGSTVVMLFAKDAIATFAEGVEAEAVTRMGQAFANLKDVKQAD.

Active-site charge relay system; for autoendoproteolytic cleavage activity residues include D89, H146, and S252. The active-site Schiff-base intermediate with substrate; via pyruvic acid; for decarboxylase activity is S252. S252 is modified (pyruvic acid (Ser); by autocatalysis).

This sequence belongs to the phosphatidylserine decarboxylase family. PSD-B subfamily. Prokaryotic type I sub-subfamily. Heterodimer of a large membrane-associated beta subunit and a small pyruvoyl-containing alpha subunit. Pyruvate serves as cofactor. Is synthesized initially as an inactive proenzyme. Formation of the active enzyme involves a self-maturation process in which the active site pyruvoyl group is generated from an internal serine residue via an autocatalytic post-translational modification. Two non-identical subunits are generated from the proenzyme in this reaction, and the pyruvate is formed at the N-terminus of the alpha chain, which is derived from the carboxyl end of the proenzyme. The autoendoproteolytic cleavage occurs by a canonical serine protease mechanism, in which the side chain hydroxyl group of the serine supplies its oxygen atom to form the C-terminus of the beta chain, while the remainder of the serine residue undergoes an oxidative deamination to produce ammonia and the pyruvoyl prosthetic group on the alpha chain. During this reaction, the Ser that is part of the protease active site of the proenzyme becomes the pyruvoyl prosthetic group, which constitutes an essential element of the active site of the mature decarboxylase.

It localises to the cell membrane. It catalyses the reaction a 1,2-diacyl-sn-glycero-3-phospho-L-serine + H(+) = a 1,2-diacyl-sn-glycero-3-phosphoethanolamine + CO2. It participates in phospholipid metabolism; phosphatidylethanolamine biosynthesis; phosphatidylethanolamine from CDP-diacylglycerol: step 2/2. In terms of biological role, catalyzes the formation of phosphatidylethanolamine (PtdEtn) from phosphatidylserine (PtdSer). The polypeptide is Phosphatidylserine decarboxylase proenzyme (Shewanella baltica (strain OS223)).